The sequence spans 554 residues: Malate synthase 1 (554 aa).

The active-site Proton acceptor is arginine 177. Aspartate 457 (proton donor) is an active-site residue. Residues 552-554 (SKL) carry the SKL peroxisome targeting motif motif.

Belongs to the malate synthase family. Interacts with PEX9.

It localises to the peroxisome matrix. The catalysed reaction is glyoxylate + acetyl-CoA + H2O = (S)-malate + CoA + H(+). It functions in the pathway carbohydrate metabolism; glyoxylate cycle; (S)-malate from isocitrate: step 2/2. In terms of biological role, malate synthase which takes part in the glyoxylate cycle. MLS1 activity is essential for cells to grow on oleic acid as a sole carbon source. Two steps of the glyoxylate cycle take place in the cytosol, the splitting of isocitrate into succinate and glyoxylate, and the dehydrogenation of malate to oxaloacetate. However, the formation of malate from glyoxylate and acetyl-CoA undertaken MLS1, occurs in the peroxisomes when cells are grown on oleic acid. The source of acetyl-CoA being either peroxisomal when breaking down fatty acids, or cytosolic when extra-cellular two-carbon substrates are used, therefore, although not strictly essential, the peroxisomal localization of MLS1 appears to be advantageous for cells growing on oleic acid, in that acetyl-CoA production and utilization are thereby intimately compartmentalized together to increase efficiency. This chain is Malate synthase 1, found in Saccharomyces cerevisiae (strain ATCC 204508 / S288c) (Baker's yeast).